A 55-amino-acid polypeptide reads, in one-letter code: U2-theraphotoxin-Cg1a (55 aa).

A propeptide spanning residues 1–19 (DSPAWLKSMERIFQSEERE) is cleaved from the precursor. 3 cysteine pairs are disulfide-bonded: C20-C34, C27-C39, and C33-C47.

It belongs to the neurotoxin 10 (Hwtx-1) family. 06 (F4b) subfamily. As to expression, expressed by the venom gland.

The protein resides in the secreted. Functionally, probable ion channel inhibitor. In Chilobrachys guangxiensis (Chinese earth tiger tarantula), this protein is U2-theraphotoxin-Cg1a.